A 521-amino-acid chain; its full sequence is 7-deoxyloganic acid hydroxylase (521 aa).

A helical transmembrane segment spans residues 8–28; sequence IIFLVFVSLTLYWVYRILDWV. Asn-107 and Asn-311 each carry an N-linked (GlcNAc...) asparagine glycan. Cys-469 contacts heme.

This sequence belongs to the cytochrome P450 family. In terms of tissue distribution, mostly present in actively growing aerial organs, including leaves, flower buds and stems, and, to a lower extent, in mature leaves, roots and opened flowers. Expressed in the leaf internal phloem-associated parenchyma (IPAP) inside the mesophyll.

The protein localises to the endoplasmic reticulum membrane. It catalyses the reaction 7-deoxyloganate + reduced [NADPH--hemoprotein reductase] + O2 = loganate + oxidized [NADPH--hemoprotein reductase] + H2O + H(+). Its pathway is alkaloid biosynthesis. Its function is as follows. Component of the seco-iridoid and derivatives monoterpenoid indole alkaloids (MIAs, e.g. vincristine, quinine, and strychnine) biosynthesis pathway. Catalyzes the conversion of 7-deoxyloganic acid into loganic acid. Not active on 7-deoxyloganetic acid. The protein is 7-deoxyloganic acid hydroxylase of Catharanthus roseus (Madagascar periwinkle).